A 428-amino-acid polypeptide reads, in one-letter code: Isocitrate dehydrogenase [NADP], mitochondrial (428 aa).

The N-terminal 16 residues, 1–16 (MSMLSRRLFSTSRLAA), are a transit peptide targeting the mitochondrion. NADP(+) is bound by residues 91–93 (TIT) and Arg98. Thr93 contacts substrate. Substrate-binding positions include 110 to 116 (SPNGTIR), Arg125, and Arg148. Asp269 is a binding site for Mn(2+). Lys277 serves as a coordination point for NADP(+). A Mn(2+)-binding site is contributed by Asp292. Residues 327-332 (GTVTRH) and Asn345 contribute to the NADP(+) site.

It belongs to the isocitrate and isopropylmalate dehydrogenases family. As to quaternary structure, homodimer. It depends on Mg(2+) as a cofactor. Requires Mn(2+) as cofactor.

It localises to the mitochondrion. It catalyses the reaction D-threo-isocitrate + NADP(+) = 2-oxoglutarate + CO2 + NADPH. With respect to regulation, the enzyme is subject to end product inhibition by NADPH and 2-oxoglutarate. Functionally, mitochondrial IDP1 may regulate flux through the tricarboxylic acid cycle and respiration. Its probably critical function is the production of NADPH. The chain is Isocitrate dehydrogenase [NADP], mitochondrial (IDP1) from Saccharomyces cerevisiae (strain ATCC 204508 / S288c) (Baker's yeast).